A 491-amino-acid chain; its full sequence is Nickel-binding protein NikA (491 aa).

A signal peptide spans 1–18; that stretch reads MKFKRLATIFSAVLVLSG. Cys19 is lipidated: N-palmitoyl cysteine. Cys19 carries S-diacylglycerol cysteine lipidation.

Belongs to the bacterial solute-binding protein 5 family. In terms of assembly, the complex is composed of two ATP-binding proteins (NikD and NikE), two transmembrane proteins (NikB and NikC) and a solute-binding protein (NikA).

The protein resides in the cell membrane. Its function is as follows. Part of the ABC transporter complex NikABCDE (Opp2) involved in nickel import. Binds nickel and transfers it to the membrane-bound permease. Required for full urease activity and plays a significant role in the virulence of S.aureus during urinary tract infection (UTI). May bind nickel via a nickel-chelator. In Staphylococcus aureus (strain NCTC 8325 / PS 47), this protein is Nickel-binding protein NikA.